A 423-amino-acid chain; its full sequence is GPI mannosyltransferase 2 (423 aa).

The next 9 membrane-spanning stretches (helical) occupy residues 7–27 (LTLI…ILSG), 102–122 (VILG…LVLY), 128–148 (IFNP…PTAT), 151–171 (APYT…LLSI), 191–211 (TGIF…AHIF), 228–248 (FLSA…TETV), 298–318 (LAMP…SHLV), 333–353 (PPPI…LLLF), and 400–420 (YWIG…AGHY).

It belongs to the PIGV family.

It is found in the endoplasmic reticulum membrane. It functions in the pathway glycolipid biosynthesis; glycosylphosphatidylinositol-anchor biosynthesis. Its function is as follows. Mannosyltransferase involved in glycosylphosphatidylinositol-anchor biosynthesis. Transfers the second mannose to the glycosylphosphatidylinositol during GPI precursor assembly. The chain is GPI mannosyltransferase 2 (GPI18) from Cryptococcus neoformans var. neoformans serotype D (strain JEC21 / ATCC MYA-565) (Filobasidiella neoformans).